Here is a 265-residue protein sequence, read N- to C-terminus: MTDRYAVFGHPIAHSKSPQIHAAFARQTGQDMCYEAILAPLEGFTESIARFAAQGGRGANVTVPFKEEAFRLADRLTPRAERAGAVNTLMFDADGILGDNTDGTGLVADLTGNLKRPLATRRILLVGAGGAARGVIAPLLEQAPAELVIANRTVSRAEQLAELFDGRLRACGFDALDTPFDVVINATAASLAGELPPLPPQVFGTGALAYDMMYGRDTPFLAFARAHGADTADGLGMLVEQAAEAFHLWRGVRPDTAPVIAALRA.

Shikimate-binding positions include 15-17 and threonine 62; that span reads SKS. The active-site Proton acceptor is the lysine 66. Positions 87 and 102 each coordinate shikimate. Residues 127-131, 151-156, and methionine 212 contribute to the NADP(+) site; these read GAGGA and NRTVSR. Tyrosine 214 contributes to the shikimate binding site. Residue glycine 234 participates in NADP(+) binding.

The protein belongs to the shikimate dehydrogenase family. In terms of assembly, homodimer.

It catalyses the reaction shikimate + NADP(+) = 3-dehydroshikimate + NADPH + H(+). It participates in metabolic intermediate biosynthesis; chorismate biosynthesis; chorismate from D-erythrose 4-phosphate and phosphoenolpyruvate: step 4/7. Its function is as follows. Involved in the biosynthesis of the chorismate, which leads to the biosynthesis of aromatic amino acids. Catalyzes the reversible NADPH linked reduction of 3-dehydroshikimate (DHSA) to yield shikimate (SA). This is Shikimate dehydrogenase (NADP(+)) from Thiobacillus denitrificans (strain ATCC 25259 / T1).